We begin with the raw amino-acid sequence, 323 residues long: Cytoskeleton protein RodZ (323 aa).

Residues 1 to 111 (MNTEASQDKT…LGKRRKKRDG (111 aa)) lie on the Cytoplasmic side of the membrane. The 53-residue stretch at 19–71 (LRQAREQLGLSQQAVAERLCLKMSTVRDIEEDNLSADLASTFVRGYIRSYAKL) folds into the HTH cro/C1-type domain. The segment at residues 30–49 (QQAVAERLCLKMSTVRDIEE) is a DNA-binding region (H-T-H motif). A helical; Signal-anchor for type II membrane protein transmembrane segment spans residues 112 to 132 (WLMSFTWLIVFVVVGLTGAWW). Residues 133–323 (WQNHKAQQEE…RVARLTVAAQ (191 aa)) lie on the Periplasmic side of the membrane. Polar residues-rich tracts occupy residues 149-172 (QSSA…NADN) and 179-214 (NGST…SPSQ). Positions 149 to 236 (QSSAQLSQNN…APLPTADAGV (88 aa)) are disordered. Positions 215–234 (TTLPETTPAAPTAPLPTADA) are enriched in low complexity.

Belongs to the RodZ family.

The protein resides in the cell inner membrane. In terms of biological role, cytoskeletal protein that is involved in cell-shape control through regulation of the length of the long axis. The chain is Cytoskeleton protein RodZ from Serratia proteamaculans (strain 568).